The chain runs to 190 residues: Small ribosomal subunit protein uS5 (190 aa).

Residues 19 to 82 (IIDKLVTINR…ERAKRSMIRV (64 aa)) form the S5 DRBM domain. Residues 161–190 (SVASRRGKKVSDILGRREPVAGQEGEEAHA) are disordered. Over residues 169–179 (KVSDILGRREP) the composition is skewed to basic and acidic residues.

Belongs to the universal ribosomal protein uS5 family. As to quaternary structure, part of the 30S ribosomal subunit. Contacts proteins S4 and S8.

Functionally, with S4 and S12 plays an important role in translational accuracy. In terms of biological role, located at the back of the 30S subunit body where it stabilizes the conformation of the head with respect to the body. This is Small ribosomal subunit protein uS5 from Granulibacter bethesdensis (strain ATCC BAA-1260 / CGDNIH1).